The following is a 433-amino-acid chain: Aspartate--tRNA(Asp/Asn) ligase (433 aa).

An L-aspartate-binding site is contributed by Glu167. The aspartate stretch occupies residues 189–192 (QLFK). Position 211 (Arg211) interacts with L-aspartate. ATP-binding positions include 211–213 (RAE), 219–221 (RHL), and Glu356. Positions 356 and 359 each coordinate Mg(2+). L-aspartate contacts are provided by Ser359 and Arg363. 404–407 (GGER) is a binding site for ATP.

Belongs to the class-II aminoacyl-tRNA synthetase family. Type 2 subfamily. As to quaternary structure, homodimer. Requires Mg(2+) as cofactor.

The protein localises to the cytoplasm. The catalysed reaction is tRNA(Asx) + L-aspartate + ATP = L-aspartyl-tRNA(Asx) + AMP + diphosphate. Functionally, aspartyl-tRNA synthetase with relaxed tRNA specificity since it is able to aspartylate not only its cognate tRNA(Asp) but also tRNA(Asn). Reaction proceeds in two steps: L-aspartate is first activated by ATP to form Asp-AMP and then transferred to the acceptor end of tRNA(Asp/Asn). This Haloferax volcanii (Halobacterium volcanii) protein is Aspartate--tRNA(Asp/Asn) ligase.